Consider the following 314-residue polypeptide: Chitinase 1 (314 aa).

The first 26 residues, 1-26 (MASVSPSSLLLLFFALLSPLLPLTSA), serve as a signal peptide directing secretion. The GH18 domain occupies 27-296 (LVFREYIGSQ…NVFRYEMQAQ (270 aa)). Catalysis depends on E151, which acts as the Proton donor.

This sequence belongs to the glycosyl hydrolase 18 family. Chitinase class II subfamily.

It catalyses the reaction Random endo-hydrolysis of N-acetyl-beta-D-glucosaminide (1-&gt;4)-beta-linkages in chitin and chitodextrins.. Functionally, able to cleave glycolchitin. In Tulipa saxatilis subsp. bakeri (Tulip), this protein is Chitinase 1.